Consider the following 312-residue polypeptide: Olfactory receptor 6C74 (312 aa).

Topologically, residues 1 to 23 are extracellular; that stretch reads MRNHTTVANFILLGLTDDPQLQV. N-linked (GlcNAc...) asparagine glycosylation occurs at Asn3. The chain crosses the membrane as a helical span at residues 24 to 44; it reads IIFLLLFFTYMLSITGNLTII. Residues 45-63 lie on the Cytoplasmic side of the membrane; it reads TLTLLDLHLKTPMYFFLRN. A helical membrane pass occupies residues 64–84; the sequence is FSFLEVSFTTVYIPKFLVSMA. Residues 85–95 are Extracellular-facing; the sequence is TGDKTISYNDC. A disulfide bridge links Cys95 with Cys177. The chain crosses the membrane as a helical span at residues 96 to 116; sequence AAQLFFTILLGATEFFLLAAM. The Cytoplasmic portion of the chain corresponds to 117–140; the sequence is SYERYVAICKPLHYTTIMSSRVCS. A helical membrane pass occupies residues 141–161; that stretch reads LLVFASWMAGFLIIFPPLLMG. Over 162-194 the chain is Extracellular; the sequence is LQLDFCAANTVDHFFCDVSPILQLSCTDTDIIE. The helical transmembrane segment at 195-215 threads the bilayer; the sequence is LMMLLSAILTLLVTLVLVILS. Topologically, residues 216–237 are cytoplasmic; it reads YTNIIRTILKIPSSQQRKKAFS. A helical membrane pass occupies residues 238 to 258; that stretch reads TCSSHMVVVSISYGSCIFMYV. The Extracellular segment spans residues 259 to 269; sequence KPSAKERVSLN. The chain crosses the membrane as a helical span at residues 270–290; that stretch reads KGIALLSTSVAPMLNPFIYTL. Residues 291–312 lie on the Cytoplasmic side of the membrane; the sequence is RNKQVKDVFKHTVKKIELFSMK.

It belongs to the G-protein coupled receptor 1 family.

The protein resides in the cell membrane. Functionally, odorant receptor. This Homo sapiens (Human) protein is Olfactory receptor 6C74 (OR6C74).